The sequence spans 225 residues: Enolase-phosphatase E1 (225 aa).

This sequence belongs to the HAD-like hydrolase superfamily. MasA/MtnC family. Monomer. Mg(2+) is required as a cofactor.

The enzyme catalyses 5-methylsulfanyl-2,3-dioxopentyl phosphate + H2O = 1,2-dihydroxy-5-(methylsulfanyl)pent-1-en-3-one + phosphate. The protein operates within amino-acid biosynthesis; L-methionine biosynthesis via salvage pathway; L-methionine from S-methyl-5-thio-alpha-D-ribose 1-phosphate: step 3/6. It functions in the pathway amino-acid biosynthesis; L-methionine biosynthesis via salvage pathway; L-methionine from S-methyl-5-thio-alpha-D-ribose 1-phosphate: step 4/6. In terms of biological role, bifunctional enzyme that catalyzes the enolization of 2,3-diketo-5-methylthiopentyl-1-phosphate (DK-MTP-1-P) into the intermediate 2-hydroxy-3-keto-5-methylthiopentenyl-1-phosphate (HK-MTPenyl-1-P), which is then dephosphorylated to form the acireductone 1,2-dihydroxy-3-keto-5-methylthiopentene (DHK-MTPene). The protein is Enolase-phosphatase E1 of Shewanella loihica (strain ATCC BAA-1088 / PV-4).